Reading from the N-terminus, the 344-residue chain is Dihydroorotase (344 aa).

2 residues coordinate Zn(2+): histidine 14 and histidine 16. Substrate is bound by residues 16–18 (HLR) and asparagine 42. The Zn(2+) site is built by lysine 100, histidine 137, and histidine 175. At lysine 100 the chain carries N6-carboxylysine. Residue histidine 137 participates in substrate binding. Leucine 220 lines the substrate pocket. Aspartate 248 serves as a coordination point for Zn(2+). Aspartate 248 is a catalytic residue. Residues histidine 252 and alanine 264 each contribute to the substrate site.

It belongs to the metallo-dependent hydrolases superfamily. DHOase family. Class II DHOase subfamily. Homodimer. Zn(2+) is required as a cofactor.

It catalyses the reaction (S)-dihydroorotate + H2O = N-carbamoyl-L-aspartate + H(+). The protein operates within pyrimidine metabolism; UMP biosynthesis via de novo pathway; (S)-dihydroorotate from bicarbonate: step 3/3. Catalyzes the reversible cyclization of carbamoyl aspartate to dihydroorotate. This chain is Dihydroorotase, found in Cupriavidus necator (strain ATCC 17699 / DSM 428 / KCTC 22496 / NCIMB 10442 / H16 / Stanier 337) (Ralstonia eutropha).